The sequence spans 271 residues: Glutamate racemase (271 aa).

Substrate contacts are provided by residues 10–11 (DS) and 42–43 (YG). C73 (proton donor/acceptor) is an active-site residue. 74-75 (NT) contacts substrate. Catalysis depends on C183, which acts as the Proton donor/acceptor. 184-185 (TH) serves as a coordination point for substrate.

This sequence belongs to the aspartate/glutamate racemases family.

It catalyses the reaction L-glutamate = D-glutamate. It participates in cell wall biogenesis; peptidoglycan biosynthesis. Functionally, provides the (R)-glutamate required for cell wall biosynthesis. The chain is Glutamate racemase from Lactococcus lactis subsp. cremoris (strain SK11).